A 123-amino-acid chain; its full sequence is Large ribosomal subunit protein bL12 (123 aa).

This sequence belongs to the bacterial ribosomal protein bL12 family. In terms of assembly, homodimer. Part of the ribosomal stalk of the 50S ribosomal subunit. Forms a multimeric L10(L12)X complex, where L10 forms an elongated spine to which 2 to 4 L12 dimers bind in a sequential fashion. Binds GTP-bound translation factors.

In terms of biological role, forms part of the ribosomal stalk which helps the ribosome interact with GTP-bound translation factors. Is thus essential for accurate translation. This Ectopseudomonas mendocina (strain ymp) (Pseudomonas mendocina) protein is Large ribosomal subunit protein bL12.